A 450-amino-acid polypeptide reads, in one-letter code: uncharacterized protein (450 aa).

The next 12 membrane-spanning stretches (helical) occupy residues 10-30 (IIVL…LVIA), 53-73 (LGGG…AIAI), 95-115 (TAGN…LFAI), 120-140 (LLPV…SIFN), 148-168 (AVAC…PVGF), 199-219 (LAML…IFIT), 242-262 (IANI…ATFA), 267-287 (TSST…CGIF), 302-322 (LMAM…VINA), 343-363 (IAAL…GSSF), 378-398 (LSFG…AALG), and 428-448 (VVPT…IAAM).

It is found in the cell membrane. This is an uncharacterized protein from Haemophilus influenzae (strain ATCC 51907 / DSM 11121 / KW20 / Rd).